Reading from the N-terminus, the 469-residue chain is Cysteine--tRNA ligase (469 aa).

C28 serves as a coordination point for Zn(2+). Residues 30-40 carry the 'HIGH' region motif; the sequence is CTVYDLCHIGH. C216, H241, and E245 together coordinate Zn(2+). The 'KMSKS' region signature appears at 273–277; that stretch reads KMSKS. K276 lines the ATP pocket.

The protein belongs to the class-I aminoacyl-tRNA synthetase family. In terms of assembly, monomer. Zn(2+) is required as a cofactor.

The protein resides in the cytoplasm. It carries out the reaction tRNA(Cys) + L-cysteine + ATP = L-cysteinyl-tRNA(Cys) + AMP + diphosphate. This Colwellia psychrerythraea (strain 34H / ATCC BAA-681) (Vibrio psychroerythus) protein is Cysteine--tRNA ligase.